Consider the following 152-residue polypeptide: Small ribosomal subunit protein uS13 (152 aa).

Residue Ser41 is modified to Phosphoserine.

It belongs to the universal ribosomal protein uS13 family.

It localises to the cytoplasm. In terms of biological role, located at the top of the head of the 40S subunit, it contacts several helices of the 18S rRNA. The chain is Small ribosomal subunit protein uS13 (RpS18) from Drosophila melanogaster (Fruit fly).